Consider the following 2711-residue polypeptide: Chromodomain-helicase-DNA-binding protein 6 (2711 aa).

Basic and acidic residues-rich tracts occupy residues 1–12 (MKMKIQKKEKQL), 100–115 (EPGE…DREP), 122–151 (EPKE…DGVK), and 158–171 (EASG…KRSC). Disordered stretches follow at residues 1 to 52 (MKMK…EEAA) and 66 to 243 (EEAD…QVKR). Residues 1-746 (MKMKIQKKEK…MMELRKCCNH (746 aa)) form a required for DNA-dependent ATPase activity region. Over residues 214-224 (SLPNPSLQSPE) the composition is skewed to low complexity. Chromo domains follow at residues 291 to 342 (NIIE…KDPR) and 374 to 438 (IEID…KHVE). Residues 472–646 (LFNWYNRKNC…FSLLNFLEPS (175 aa)) form the Helicase ATP-binding domain. 485-492 (DEMGLGKT) lines the ATP pocket. The DEAH box motif lies at 597-600 (DEAH). The Helicase C-terminal domain maps to 786-955 (LIDKLLPKLI…LSKMEVEDLL (170 aa)). The tract at residues 1318-1389 (SLSAEQGVTD…SDPDKSPWPV (72 aa)) is disordered. Over residues 1320–1329 (SAEQGVTDGT) the composition is skewed to polar residues. Basic and acidic residues predominate over residues 1332–1350 (IPERGNIDKEDSAEDKLDG). The Myb-like domain maps to 1448-1502 (RWTRREQADFYRTVSSFGVVYDQEKKAFDWTQFRIISRLDKKSDESLEHYFYSFV). Phosphoserine is present on serine 1865. 7 disordered regions span residues 1951–1978 (SEDS…TVEG), 1997–2059 (EPWK…ASGI), 2124–2147 (LPTP…ATEH), 2321–2350 (TTLS…QAEK), 2373–2419 (GFGT…RGFL), 2550–2602 (SASL…ITTS), and 2641–2711 (RHSE…EDTN). Residues 2017–2036 (SEPKPEDMDFENKDDYEKDG) show a composition bias toward basic and acidic residues. Low complexity-rich tracts occupy residues 2130–2140 (SSSAGSRSSLS) and 2333–2349 (ATSS…SQAE). The span at 2550–2563 (SASLASTKSGTSAT) shows a compositional bias: low complexity. The segment covering 2565–2586 (KSTEDKLSGHDVNTDALVDDKP) has biased composition (basic and acidic residues). Composition is skewed to polar residues over residues 2591 to 2602 (FSDQSEPTITTS) and 2677 to 2688 (SDQNCTESSATV). Residues 2690–2711 (PEREHVAQAREEGLKDSNEDTN) are compositionally biased toward basic and acidic residues.

The protein belongs to the SNF2/RAD54 helicase family. As to quaternary structure, interacts with NFE2L2; involved in activation of the transcription. Widely expressed.

The protein resides in the nucleus. It localises to the nucleoplasm. It catalyses the reaction ATP + H2O = ADP + phosphate + H(+). ATP-dependent chromatin-remodeling factor. Regulates transcription by disrupting nucleosomes in a largely non-sliding manner which strongly increases the accessibility of chromatin. Activates transcription of specific genes in response to oxidative stress through interaction with NFE2L2. The chain is Chromodomain-helicase-DNA-binding protein 6 (Chd6) from Mus musculus (Mouse).